We begin with the raw amino-acid sequence, 356 residues long: UDP-N-acetylglucosamine--N-acetylmuramyl-(pentapeptide) pyrophosphoryl-undecaprenol N-acetylglucosamine transferase (356 aa).

Residues 15 to 17, Asn-127, Arg-163, Ser-191, Ile-244, 263 to 268, and Gln-288 contribute to the UDP-N-acetyl-alpha-D-glucosamine site; these read TGG and ALTVSE.

The protein belongs to the glycosyltransferase 28 family. MurG subfamily.

Its subcellular location is the cell inner membrane. The catalysed reaction is di-trans,octa-cis-undecaprenyl diphospho-N-acetyl-alpha-D-muramoyl-L-alanyl-D-glutamyl-meso-2,6-diaminopimeloyl-D-alanyl-D-alanine + UDP-N-acetyl-alpha-D-glucosamine = di-trans,octa-cis-undecaprenyl diphospho-[N-acetyl-alpha-D-glucosaminyl-(1-&gt;4)]-N-acetyl-alpha-D-muramoyl-L-alanyl-D-glutamyl-meso-2,6-diaminopimeloyl-D-alanyl-D-alanine + UDP + H(+). The protein operates within cell wall biogenesis; peptidoglycan biosynthesis. Functionally, cell wall formation. Catalyzes the transfer of a GlcNAc subunit on undecaprenyl-pyrophosphoryl-MurNAc-pentapeptide (lipid intermediate I) to form undecaprenyl-pyrophosphoryl-MurNAc-(pentapeptide)GlcNAc (lipid intermediate II). The polypeptide is UDP-N-acetylglucosamine--N-acetylmuramyl-(pentapeptide) pyrophosphoryl-undecaprenol N-acetylglucosamine transferase (Yersinia pestis bv. Antiqua (strain Antiqua)).